We begin with the raw amino-acid sequence, 391 residues long: Anhydro-N-acetylmuramic acid kinase (391 aa).

Residue 9 to 16 (GTSYDAVE) participates in ATP binding.

Belongs to the anhydro-N-acetylmuramic acid kinase family.

The enzyme catalyses 1,6-anhydro-N-acetyl-beta-muramate + ATP + H2O = N-acetyl-D-muramate 6-phosphate + ADP + H(+). Its pathway is amino-sugar metabolism; 1,6-anhydro-N-acetylmuramate degradation. It participates in cell wall biogenesis; peptidoglycan recycling. Functionally, catalyzes the specific phosphorylation of 1,6-anhydro-N-acetylmuramic acid (anhMurNAc) with the simultaneous cleavage of the 1,6-anhydro ring, generating MurNAc-6-P. Is required for the utilization of anhMurNAc either imported from the medium or derived from its own cell wall murein, and thus plays a role in cell wall recycling. The polypeptide is Anhydro-N-acetylmuramic acid kinase (Streptomyces coelicolor (strain ATCC BAA-471 / A3(2) / M145)).